Reading from the N-terminus, the 625-residue chain is MAARLATVACALFLLSSALLRLGCRARFAAEPDSDEDGEETVAFPESPPQKPTVFVVVLARNAAHTLPYFLGCLERLDYPKSRMAIWAATDHNVDNTTEILREWLKSVQRLYHYVEWRPMNEPESYPDEIGPKHWPNSRFSHVMKLRQAALRTAREKWSDYILFIDVDNFLTNPQTLNLMIVENKTIVAPMLESRGLYSNFWCGITPQGFYKRTPDYLQIREWKRMGCFPVPMVHSTFLIDLRKEASDKLAFYPPHQDYTWTFDDIIVFAFSSRQAGIQMYLCNKEHYGYLPIPLKPHQTLQEDVENLIHVQIEAMIDHPPMEPSQFVSVVPKYPDKMGFDEIFMINLKRRKDRRDRMLRTLYEQEIEVKIVEAVDGKALNTSQLKAWNIEMLPGYRDPYSSRPLTRGEIGCFLSHFSVWKEVIDRELEKTLVIEDDVRFEHQFKRKLMKLMEDIDKAQLDWELIYIGRKRMQVKEPEKAVPNVVNLVEADYSYWTLGYAISLEGAQKLVGADPFGKMLPVDEFLPIMYNKHPVAEYKEYYESRDLKAFSAEPLLIYPTHYTGQPGYLSDTETSTIWDNETVATDWDRTHSWKSRKQGHIRSTAKNTEALPPPTSLDTVPSRDEL.

Positions 1 to 26 (MAARLATVACALFLLSSALLRLGCRA) are cleaved as a signal peptide. Residues asparagine 96, asparagine 184, asparagine 381, and asparagine 579 are each glycosylated (N-linked (GlcNAc...) asparagine). The tract at residues 597–625 (QGHIRSTAKNTEALPPPTSLDTVPSRDEL) is disordered. The Prevents secretion from ER motif lies at 622 to 625 (RDEL).

This sequence belongs to the glycosyltransferase 25 family.

It is found in the endoplasmic reticulum lumen. The enzyme catalyses (5R)-5-hydroxy-L-lysyl-[collagen] + UDP-alpha-D-galactose = (5R)-5-O-(beta-D-galactosyl)-5-hydroxy-L-lysyl-[collagen] + UDP + H(+). Beta-galactosyltransferase that transfers beta-galactose to hydroxylysine residues of collagen. This chain is Procollagen galactosyltransferase 2 (Colgalt2), found in Mus musculus (Mouse).